The sequence spans 404 residues: Probable glucan endo-1,6-beta-glucosidase B (404 aa).

A signal peptide spans 1–20 (MTTYQTLFLIPLAISTLVTA). N-linked (GlcNAc...) asparagine glycosylation is found at asparagine 33 and asparagine 130. Residue glutamate 222 is the Proton donor of the active site. Residues asparagine 253 and asparagine 299 are each glycosylated (N-linked (GlcNAc...) asparagine). Glutamate 324 acts as the Nucleophile in catalysis.

This sequence belongs to the glycosyl hydrolase 5 (cellulase A) family.

It localises to the secreted. The catalysed reaction is Random hydrolysis of (1-&gt;6)-linkages in (1-&gt;6)-beta-D-glucans.. In terms of biological role, beta-glucanases participate in the metabolism of beta-glucan, the main structural component of the cell wall. Acts on lutean, pustulan and 1,6-oligo-beta-D-glucosides. This Aspergillus terreus (strain NIH 2624 / FGSC A1156) protein is Probable glucan endo-1,6-beta-glucosidase B (exgB).